The sequence spans 192 residues: Segregation and condensation protein B (192 aa).

This sequence belongs to the ScpB family. In terms of assembly, homodimer. Homodimerization may be required to stabilize the binding of ScpA to the Smc head domains. Component of a cohesin-like complex composed of ScpA, ScpB and the Smc homodimer, in which ScpA and ScpB bind to the head domain of Smc. The presence of the three proteins is required for the association of the complex with DNA.

The protein resides in the cytoplasm. Participates in chromosomal partition during cell division. May act via the formation of a condensin-like complex containing Smc and ScpA that pull DNA away from mid-cell into both cell halves. In Mycoplasma mobile (strain ATCC 43663 / 163K / NCTC 11711) (Mesomycoplasma mobile), this protein is Segregation and condensation protein B.